We begin with the raw amino-acid sequence, 155 residues long: Ribosomal RNA large subunit methyltransferase H (155 aa).

Residues leucine 72, glycine 103, and 122 to 127 (LSALTL) contribute to the S-adenosyl-L-methionine site.

Belongs to the RNA methyltransferase RlmH family. Homodimer.

It is found in the cytoplasm. It carries out the reaction pseudouridine(1915) in 23S rRNA + S-adenosyl-L-methionine = N(3)-methylpseudouridine(1915) in 23S rRNA + S-adenosyl-L-homocysteine + H(+). Functionally, specifically methylates the pseudouridine at position 1915 (m3Psi1915) in 23S rRNA. This Shigella boydii serotype 18 (strain CDC 3083-94 / BS512) protein is Ribosomal RNA large subunit methyltransferase H.